A 603-amino-acid chain; its full sequence is MNAAAKAGKLARAPADLGKGGVPGDAAPGAPGAAPLAKEIPEVLMDPRSRRQYVRGRFLGKGGFAKCFEISDSDTKEVFPGKIVPKSLLLKPHQKEKMSMEISIHRSLAHQHVVGFHGFFEDSDFVFVVLELCRRRSLLELHKRRKALTEPEARYYLRQIVLGCQYLHRNQVIHRDLKLGNLFLNEDLEVKIGDFGLATKVEYEGERKKTLCGTPNYIAPEVLSKKGHSFEVDVWSIGCIMYTLLVGKPPFETSCLKETYLRIKKNEYSIPKHINPVAASLIQKMLQTDPTARPTIHELLNDEFFTSGYIPARLPITCLTIPPRFSIAPSSLDPSNRKPLTVLNKGVENPLPDRPREKEEPVVRETNEAIECHLSDLLQQLTSVNASKPSERGLVRQEEAEDPACIPIFWVSKWVDYSDKYGLGYQLCDNSVGVLFNDSTRLILYNDGDSLQYIERDGTESYLTVSSHPNSLMKKITLLNYFRNYMSEHLLKAGANITPREGDELARLPYLRTWFRTRSAIILHLSNGTVQINFFQDHTKLILCPLMAAVTYINEKRDFRTYRLSLLEEYGCCKELASRLRYARTMVDKLLSSRSACNRLKAS.

Positions 1–15 (MNAAAKAGKLARAPA) are enriched in low complexity. Residues 1-32 (MNAAAKAGKLARAPADLGKGGVPGDAAPGAPG) form a disordered region. A Glycyl lysine isopeptide (Lys-Gly) (interchain with G-Cter in ubiquitin) cross-link involves residue lysine 19. The Protein kinase domain maps to 53–305 (YVRGRFLGKG…IHELLNDEFF (253 aa)). Residues 59-67 (LGKGGFAKC) and lysine 82 contribute to the ATP site. Serine 103 bears the Phosphoserine mark. Glutamate 131 lines the ATP pocket. Serine 137 carries the post-translational modification Phosphoserine. The Proton acceptor role is filled by aspartate 176. Residues 178–181 (KLGN) and aspartate 194 contribute to the ATP site. An activation loop region spans residues 194 to 221 (DFGLATKVEYEGERKKTLCGTPNYIAPE). Phosphothreonine; by AURKA is present on threonine 210. The residue at position 214 (threonine 214) is a Phosphothreonine. 2 positions are modified to phosphoserine; by autocatalysis: serine 269 and serine 335. The D-box that targets the protein for proteasomal degradation in anaphase motif lies at 337-340 (RKPL). Lysine 338 is covalently cross-linked (Glycyl lysine isopeptide (Lys-Gly) (interchain with G-Cter in SUMO2)). The interval 338–361 (KPLTVLNKGVENPLPDRPREKEEP) is disordered. The span at 351–361 (LPDRPREKEEP) shows a compositional bias: basic and acidic residues. Residues serine 375 and serine 450 each carry the phosphoserine modification. A POLO box 1 domain is found at 410–488 (WVSKWVDYSD…LNYFRNYMSE (79 aa)). Lysine 492 is covalently cross-linked (Glycyl lysine isopeptide (Lys-Gly) (interchain with G-Cter in ubiquitin)). The linker stretch occupies residues 493 to 507 (AGANITPREGDELAR). A Phosphothreonine modification is found at threonine 498. One can recognise a POLO box 2 domain in the interval 510–592 (YLRTWFRTRS…ARTMVDKLLS (83 aa)). Residues 538 to 540 (HTK) form an important for interaction with phosphorylated proteins region.

The protein belongs to the protein kinase superfamily. Ser/Thr protein kinase family. CDC5/Polo subfamily. Interacts with CEP170 and EVI5. Interacts and phosphorylates ERCC6L. Interacts with FAM29A. Interacts with SLX4/BTBD12 and TTDN1. Interacts with BUB1B. Interacts (via POLO-box domain) with the phosphorylated form of BUB1, CENPU and CDC25C. Interacts with isoform 3 of SGO1. Interacts with BORA, KIF2A and AURKA. Interacts with TOPORS and CYLD. Interacts with ECT2; the interaction is stimulated upon phosphorylation of ECT2 on 'Thr-444'. Interacts with PRC1. Interacts with KIF20A/MKLP2 (when phosphorylated), leading to the recruitment at the central spindle. Interacts (via POLO box domains) with PPP1R12A/MYPT1 (when previously phosphorylated by CDK1). Part of an astrin (SPAG5)-kinastrin (SKAP) complex containing KNSTRN, SPAG5, PLK1, DYNLL1 and SGO2. Interacts with BIRC6/bruce. Interacts with CDK1-phosphorylated FRY; this interaction occurs in mitotic cells, but not in interphase cells. FRY interaction facilitates AURKA-mediated PLK1 phosphorylation. Interacts with CDK1-phosphorylated DCTN6 during mitotic prometaphase; the interaction facilitates recruitment to kinetochores. Interacts with CEP68; the interaction phosphorylates CEP68. Interacts (via POLO-box domain) with DCTN1. Interacts with CEP20 in later G1, S, G2 and M phases of the cell cycle; this interaction recruits PLK1 to centrosomes, a step required for S phase progression. Interacts with HSF1; this interaction increases upon heat shock but does not modulate neither HSF1 homotrimerization nor DNA-binding activities. Interacts with HNRNPU; this interaction induces phosphorylation of HNRNPU in mitosis. Interacts (via its N-terminus) with RIOK2. Interacts with KLHL22. Interacts (via POLO box domains) with NEDD9/HEF1 (via C-terminus). Interacts (via RVxF motif) with FIRRM; regulates PLK1 kinase activity. Interacts with SKA3; the interaction promotes the stability of PLK1. Interacts with the MTMR3:MTMR4 heterooligomer; brings CEP55 and PLK1 together during early mitosis, regulating the phosphorylation of CEP55 by PLK1 and its recruitment to the midbody where it can mediate cell abscission. Post-translationally, catalytic activity is enhanced by phosphorylation of Thr-210. Phosphorylation at Thr-210 is first detected on centrosomes in the G2 phase of the cell cycle, peaks in prometaphase and gradually disappears from centrosomes during anaphase. Dephosphorylation at Thr-210 at centrosomes is probably mediated by protein phosphatase 1C (PP1C), via interaction with PPP1R12A/MYPT1. Autophosphorylation and phosphorylation of Ser-137 may not be significant for the activation of PLK1 during mitosis, but may enhance catalytic activity during recovery after DNA damage checkpoint. Phosphorylated in vitro by STK10. In terms of processing, ubiquitinated by the anaphase promoting complex/cyclosome (APC/C) in anaphase and following DNA damage, leading to its degradation by the proteasome. Ubiquitination is mediated via its interaction with FZR1/CDH1. Ubiquitination and subsequent degradation prevents entry into mitosis and is essential to maintain an efficient G2 DNA damage checkpoint. Monoubiquitination at Lys-492 by the BCR(KLHL22) ubiquitin ligase complex does not lead to degradation: it promotes PLK1 dissociation from phosphoreceptor proteins and subsequent removal from kinetochores, allowing silencing of the spindle assembly checkpoint (SAC) and chromosome segregation.

The protein localises to the nucleus. Its subcellular location is the chromosome. The protein resides in the centromere. It is found in the kinetochore. It localises to the cytoplasm. The protein localises to the cytoskeleton. Its subcellular location is the microtubule organizing center. The protein resides in the centrosome. It is found in the spindle. It localises to the midbody. It catalyses the reaction L-seryl-[protein] + ATP = O-phospho-L-seryl-[protein] + ADP + H(+). It carries out the reaction L-threonyl-[protein] + ATP = O-phospho-L-threonyl-[protein] + ADP + H(+). With respect to regulation, activated by phosphorylation of Thr-210 by AURKA; phosphorylation by AURKA is enhanced by BORA. Once activated, activity is stimulated by binding target proteins. Binding of target proteins has no effect on the non-activated kinase. Several inhibitors targeting PLKs are currently in development and are under investigation in a growing number of clinical trials, such as BI 2536, an ATP-competitive PLK1 inhibitor or BI 6727, a dihydropteridinone that specifically inhibits the catalytic activity of PLK1. Its function is as follows. Serine/threonine-protein kinase that performs several important functions throughout M phase of the cell cycle, including the regulation of centrosome maturation and spindle assembly, the removal of cohesins from chromosome arms, the inactivation of anaphase-promoting complex/cyclosome (APC/C) inhibitors, and the regulation of mitotic exit and cytokinesis. Polo-like kinase proteins act by binding and phosphorylating proteins that are already phosphorylated on a specific motif recognized by the POLO box domains. Phosphorylates BORA, BUB1B/BUBR1, CCNB1, CDC25C, CEP55, ECT2, ERCC6L, FBXO5/EMI1, FOXM1, KIF20A/MKLP2, CENPU, NEDD1, NINL, NPM1, NUDC, PKMYT1/MYT1, KIZ, PPP1R12A/MYPT1, PRC1, RACGAP1/CYK4, RHNO1, SGO1, STAG2/SA2, TEX14, TOPORS, p73/TP73, TPT1, WEE1 and HNRNPU. Plays a key role in centrosome functions and the assembly of bipolar spindles by phosphorylating KIZ, NEDD1 and NINL. NEDD1 phosphorylation promotes subsequent targeting of the gamma-tubulin ring complex (gTuRC) to the centrosome, an important step for spindle formation. Phosphorylation of NINL component of the centrosome leads to NINL dissociation from other centrosomal proteins. Involved in mitosis exit and cytokinesis by phosphorylating CEP55, ECT2, KIF20A/MKLP2, CENPU, PRC1 and RACGAP1. Recruited at the central spindle by phosphorylating and docking PRC1 and KIF20A/MKLP2; creates its own docking sites on PRC1 and KIF20A/MKLP2 by mediating phosphorylation of sites subsequently recognized by the POLO box domains. Phosphorylates RACGAP1, thereby creating a docking site for the Rho GTP exchange factor ECT2 that is essential for the cleavage furrow formation. Promotes the central spindle recruitment of ECT2. Plays a central role in G2/M transition of mitotic cell cycle by phosphorylating CCNB1, CDC25C, FOXM1, CENPU, PKMYT1/MYT1, PPP1R12A/MYPT1 and WEE1. Part of a regulatory circuit that promotes the activation of CDK1 by phosphorylating the positive regulator CDC25C and inhibiting the negative regulators WEE1 and PKMYT1/MYT1. Also acts by mediating phosphorylation of cyclin-B1 (CCNB1) on centrosomes in prophase. Phosphorylates FOXM1, a key mitotic transcription regulator, leading to enhance FOXM1 transcriptional activity. Involved in kinetochore functions and sister chromatid cohesion by phosphorylating BUB1B/BUBR1, FBXO5/EMI1 and STAG2/SA2. PLK1 is high on non-attached kinetochores suggesting a role of PLK1 in kinetochore attachment or in spindle assembly checkpoint (SAC) regulation. Required for kinetochore localization of BUB1B. Regulates the dissociation of cohesin from chromosomes by phosphorylating cohesin subunits such as STAG2/SA2. Phosphorylates SGO1: required for spindle pole localization of isoform 3 of SGO1 and plays a role in regulating its centriole cohesion function. Mediates phosphorylation of FBXO5/EMI1, a negative regulator of the APC/C complex during prophase, leading to FBXO5/EMI1 ubiquitination and degradation by the proteasome. Acts as a negative regulator of p53 family members: phosphorylates TOPORS, leading to inhibit the sumoylation of p53/TP53 and simultaneously enhance the ubiquitination and subsequent degradation of p53/TP53. Phosphorylates the transactivation domain of the transcription factor p73/TP73, leading to inhibit p73/TP73-mediated transcriptional activation and pro-apoptotic functions. Phosphorylates BORA, and thereby promotes the degradation of BORA. Contributes to the regulation of AURKA function. Also required for recovery after DNA damage checkpoint and entry into mitosis. Phosphorylates MISP, leading to stabilization of cortical and astral microtubule attachments required for proper spindle positioning. Together with MEIKIN, acts as a regulator of kinetochore function during meiosis I: required both for mono-orientation of kinetochores on sister chromosomes and protection of centromeric cohesin from separase-mediated cleavage. Phosphorylates CEP68 and is required for its degradation. Regulates nuclear envelope breakdown during prophase by phosphorylating DCTN1 resulting in its localization in the nuclear envelope. Phosphorylates the heat shock transcription factor HSF1, promoting HSF1 nuclear translocation upon heat shock. Phosphorylates HSF1 also in the early mitotic period; this phosphorylation regulates HSF1 localization to the spindle pole, the recruitment of the SCF(BTRC) ubiquitin ligase complex induicing HSF1 degradation, and hence mitotic progression. Regulates mitotic progression by phosphorylating RIOK2. Through the phosphorylation of DZIP1 regulates the localization during mitosis of the BBSome, a ciliary protein complex involved in cilium biogenesis. Regulates DNA repair during mitosis by mediating phosphorylation of POLQ and RHNO1, thereby promoting POLQ recruitment to DNA damage sites. Phosphorylates ATXN10 which may play a role in the regulation of cytokinesis and may stimulate the proteasome-mediated degradation of ATXN10. The protein is Serine/threonine-protein kinase PLK1 (Plk1) of Rattus norvegicus (Rat).